Here is a 457-residue protein sequence, read N- to C-terminus: Protein N-terminal amidase (457 aa).

Residues 19 to 453 enclose the CN hydrolase domain; sequence LKVLVIQLNP…EGAILREVQF (435 aa). E63 functions as the Proton acceptor in the catalytic mechanism. Catalysis depends on K136, which acts as the Proton donor. The active-site Nucleophile is C187.

Belongs to the carbon-nitrogen hydrolase superfamily.

Its function is as follows. Deamidates N-terminal Asn and Gln. Component of a targeting complex in the N-end rule pathway. The chain is Protein N-terminal amidase (NTA1) from Saccharomyces cerevisiae (strain ATCC 204508 / S288c) (Baker's yeast).